Consider the following 580-residue polypeptide: Malto-oligosyltrehalose trehalohydrolase (580 aa).

Positions 56–88 (LPDPRSARQPDGVHARSQRWEPPGQFGAARTDT) are disordered. Positions 60 to 69 (RSARQPDGVH) are enriched in basic and acidic residues. 245 to 250 (RLDAVH) is a binding site for substrate. Aspartate 247 (nucleophile) is an active-site residue. Residue glutamate 284 is the Proton donor of the active site. Substrate is bound by residues 309–313 (DDIHH) and 379–384 (HDQVGN).

Belongs to the glycosyl hydrolase 13 family.

It is found in the cytoplasm. The catalysed reaction is hydrolysis of (1-&gt;4)-alpha-D-glucosidic linkage in 4-alpha-D-[(1-&gt;4)-alpha-D-glucanosyl]n trehalose to yield trehalose and (1-&gt;4)-alpha-D-glucan.. It participates in glycan biosynthesis; trehalose biosynthesis. Is involved in the biosynthesis of trehalose but not in that of capsular glucan and glycogen. The protein is Malto-oligosyltrehalose trehalohydrolase (treZ) of Mycobacterium tuberculosis (strain CDC 1551 / Oshkosh).